Here is a 223-residue protein sequence, read N- to C-terminus: Cytidylate kinase (223 aa).

Position 17–25 (Gly-17–Thr-25) interacts with ATP.

This sequence belongs to the cytidylate kinase family. Type 1 subfamily.

It localises to the cytoplasm. The catalysed reaction is CMP + ATP = CDP + ADP. It carries out the reaction dCMP + ATP = dCDP + ADP. The polypeptide is Cytidylate kinase (Bordetella pertussis (strain Tohama I / ATCC BAA-589 / NCTC 13251)).